The primary structure comprises 157 residues: MFCPFCRHPDSRVVDSRTSDDGLSIRRRRQCPECGRRFSTTETASLSVIKRNGVVEPFSREKIVTGVRKACQGRPVTDTDLAVLAQRVEEAIRATGASQIEANDIGLSILPPLRELDEVAYLRFASVYQGFDSLDDFEAAIAQLRVAHAATPDADAL.

A zinc finger spans residues 3 to 34; that stretch reads CPFCRHPDSRVVDSRTSDDGLSIRRRRQCPEC. Residues 46-136 enclose the ATP-cone domain; it reads LSVIKRNGVV…VYQGFDSLDD (91 aa).

The protein belongs to the NrdR family. It depends on Zn(2+) as a cofactor.

Functionally, negatively regulates transcription of bacterial ribonucleotide reductase nrd genes and operons by binding to NrdR-boxes. In Clavibacter sepedonicus (Clavibacter michiganensis subsp. sepedonicus), this protein is Transcriptional repressor NrdR.